The chain runs to 122 residues: Large ribosomal subunit protein uL14 (122 aa).

This sequence belongs to the universal ribosomal protein uL14 family. Part of the 50S ribosomal subunit. Forms a cluster with proteins L3 and L19. In the 70S ribosome, L14 and L19 interact and together make contacts with the 16S rRNA in bridges B5 and B8.

Binds to 23S rRNA. Forms part of two intersubunit bridges in the 70S ribosome. The polypeptide is Large ribosomal subunit protein uL14 (Acaryochloris marina (strain MBIC 11017)).